A 501-amino-acid chain; its full sequence is TNF receptor-associated factor 2 (501 aa).

Position 2 is an N-acetylalanine (Ala2). Position 5 is a phosphoserine (Ser5). The residue at position 7 (Thr7) is a Phosphothreonine. Phosphoserine is present on Ser11. Phosphothreonine is present on Thr22. Lys31 participates in a covalent cross-link: Glycyl lysine isopeptide (Lys-Gly) (interchain with G-Cter in ubiquitin). An RING-type zinc finger spans residues 34-73; the sequence is CSACKNILRRPFQAQCGHRYCSFCLTSILSSGPQNCAACV. Thr117 is modified (phosphothreonine; by PKC). 2 consecutive TRAF-type zinc fingers follow at residues 124–180 and 177–233; these read CHEG…VHYE and VHYE…ENLQ. An important for interaction with BIRC2 and BIRC3 region spans residues 283–293; sequence ENIVCVLNREV. The stretch at 298 to 348 forms a coiled coil; it reads VTAEACSRQHRLDQDKIEALSNKVQQLERSIGLKDLAMADLEQKVSELEVS. A Glycyl lysine isopeptide (Lys-Gly) (interchain with G-Cter in ubiquitin) cross-link involves residue Lys320. One can recognise an MATH domain in the interval 351–496; the sequence is DGVFIWKISD…DDAIFIKAIV (146 aa).

This sequence belongs to the TNF receptor-associated factor family. A subfamily. In terms of assembly, homotrimer. Heterotrimer with TRAF1. Heterotrimer with TRAF3 (via TRAF domain). The domain containing the RING-type and the first TRAF-type zinc finger can also form homodimers (in vitro). Interacts with TNFRSF1B/TNFR2. Interacts with TNFRSF5/CD40. Interacts with TNFRSF4, TNFRSF7/CD27, TNFRSF8/CD30, TNFRSF9/CD137, TNFRSF11A/RANK, TNFRSF13B/TACI, TNFRSF14, TNFRSF16/NGFR, TNFRSF17/BCMA, TNFRSF18/AITR, TNFRSF19/TROY, TNFRSF19L/RELT and EDAR. Stimulation of TNF-alpha receptor TNFRSF1A leads to the formation of two distinct signaling complexes. Plasma membrane-bound complex I is composed of TNFRSF1A, TRADD, RIPK1, TRAF2 and BIRC2/c-IAP1 or BIRC3 which interacts with CHUCK/IKK-alpha, IKBKB/IKK-beta and IKBKG/IKK-gamma promoting cell survival. Subsequently, TRADD, RIPK1 and TRAF2 dissociate from TNFRSF1A and form cytoplasmic complex II with FADD and caspase CASP8 promoting cell apoptosis. Interacts with TRADD. Identified in a complex with TNFRSF1A, RIPK1 and IKBKB/IKK-beta. Interacts with RIPK2. Interacts with BIRC2 and BIRC3 N-terminus; a single BIRC2 or BIRC3 molecule interacts with a heterotrimer formed by TRAF1 and TRAF2, or a TRAF2 homotrimer. Identified in a complex composed of TRAF2, TRAF3, BIRC2 and BIRC3. Interacts with BIRC2; the interaction promotes BIRC2 stability. Interaction with BIRC2 and/or BIRC3 is essential for ubiquitination of IKBKE, degradation of NFKBIA and activation of NF-kappa-B. Within complex I, phosphorylated TRAF2 interacts (via 'Lys-63'-linked polyubiquitin chains) with CHUCK/IKK-alpha, IKBKB/IKK-beta, IKBKG/IKK-gamma TAB2, TAB3 and TAK1 in response to TNF-alpha stimulation. Within complex I, interacts with UXT isoform 1 (via TPQE motif); the interaction prevents the recruitment of FADD and CASP8/caspase 8 to complex I. Forms a complex composed of TNFRSF8/CD30 or TNFRSF1B/TNFR2, and TRAF1, TRAF2 and E3 ligase TRAIP. Within the complex, interacts with TRAIP; the interaction inhibits TRAF2-mediated NF-kappa B activation. Component of a complex composed of TANK and TBK1. Interacts with TRPC4AP. Interacts with MAP3K1/MEKK1, MAP3K5/ASK1 and MAP3K11/MLK3 in response to TNF-alpha stimulation; the interaction leads to JNK activation and interaction with MAP3K5 is inhibited by PRMT1. Component of a complex composed of MAP3K14/NIK BIRC3 and TRAF3; the interaction leads to BIRC2/3-mediated ubiquitination of TRAF3 upon CD40 engagement in a TRAF2-dependent manner. Interacts with MAP3K14/NIK in response to TNF-alpha stimulation; the interaction leads to NF-kappa B activation. Interacts with PEG3; the interaction may promote TRAF2-mediated NF-kappa B activation. Interacts with HIVEP3; the interaction may inhibit TNF-alpha-TRAF2-mediated NF-kappa B and JNK activation. Interacts with TANK/ITRAF; the interaction prevents interaction between TNFRSF1B/TNFR2 and TRAF2. Interacts with deubiquitinating enzyme CYLD; the interaction results in the deubiquitination and inactivation of TRAF2. Interacts with SIAH2; the interaction leads to TRAF2 ubiquitination and degradation. Interacts with E2 conjugating enzyme UBE2N/Ubc13, E3 ligase ITCH and RNF11 in response to TNF-alpha stimulation. Interacts with ubiquitin-editing enzyme TNFAIP3/A20 in response to TNF-alpha stimulation; the interaction promotes TRAF2 dissociation from UBE2N/Ubc13, ITCH, RNF11 and TAX1BP1 and prevents prolonged TRAF-2 ubiquitination. Interacts with TAX1BP1 in response to TNF-alpha stimulation; the interaction promotes TRAF2 dissociation from UBE2N/Ubc13 and TNFAIP3/A20, and prevents prolonged TRAF-2 ubiquitination. Interacts (via C-terminus) with EIF2AK2/PKR (via the kinase catalytic domain). Interacts with deubiquitinating enzyme USP48. Interacts with PTPN2; probably involved in TNF-mediated signaling. Interacts with Toll-like receptor TLR4/3 adapter TICAM1/TRIF; the interaction may promote TICAM1 ubiquitination. Interacts with kinase/endoribonuclease ERN1/IRE1 and DAB2IP in response to ER stress; the interaction requires DAB2IP. Interacts with ERN1/IRE1 and TAOK3 in response to ER stress; the interaction may promote TRAF2 phosphorylation. Interacts (via zinc fingers) with DAB2IP (via C-terminus PER domain) in response to TNF-alpha stimulation. Interacts with CASP8AP2/FLASH. Interacts with NFATC2IP; the interaction may repress IL-4 production in T cells. Interacts with kinase CDK9. Interacts with sphingosine kinase 1 SPHK1. Interacts with kinase TNIK. Interacts with TRAFD1. Interacts with DNA phosphodiesterase TDP2. Interacts with MAVS/IPS1. Interacts with CARD14. Interacts with GPS2. Interacts with XPNPEP3. Interacts with RIPK3. Interacts with RELL2. Interacts with LRRC19. Interacts with GAPDH; promoting TRAF2 ubiquitination. Phosphorylated at several serine residues within the first 128 amino acid residues. Phosphorylated at Thr-117 in response to signaling via TNF and TNFRSF1A. Phosphorylation at Thr-117 is required for 'Lys-63'-linked polyubiquitination, but not for 'Lys-48'-linked polyubiquitination. Phosphorylation at Thr-117 is important for interaction with IKKA and IKKB, activation of IKK and subsequent activation of NF-kappa-B. In terms of processing, undergoes both 'Lys-48'-linked and 'Lys-63'-linked polyubiquitination. Polyubiquitinated via 'Lys-63'-linked ubiquitin in response to TNF signaling; this requires prior phosphorylation at Thr-117. 'Lys-63'-linked polyubiquitination promotes TRAF2-mediated activation of NF-kappa-B. Can be polyubiquitinated at several Lys residues via 'Lys-48'-linked ubiquitin chains in response to TNF signaling, leading to proteasomal degradation. Autoubiquitinated, leading to its subsequent proteasomal degradation. Polyubiquitinated by BIRC2 and SIAH2, leading to its subsequent proteasomal degradation. Not ubiquitinated by BIRC3 or SIAH1. Deubiquitinated by CYLD, a protease that specifically cleaves 'Lys-63'-linked polyubiquitin chains. Ubiquination is inhibited by LRRC19; inhiits proteasomal degradation. Ubiquitinated at Lys-320 by the SCF(FBXL2) complex, leading to its degradation by the proteasome. Ubiquitinated by E3 ubiquitin-protein ligase complex containing FBXO7; leading to repression of NF-kappa-B signaling. As to expression, isoform 1 and isoform 2 are expressed in spleen, adipose tissues, skeletal muscles, thymus, testis, heart, lung, brain. Isoform 2 is very weakly expressed in heart, lung and brain.

The protein resides in the cytoplasm. It carries out the reaction S-ubiquitinyl-[E2 ubiquitin-conjugating enzyme]-L-cysteine + [acceptor protein]-L-lysine = [E2 ubiquitin-conjugating enzyme]-L-cysteine + N(6)-ubiquitinyl-[acceptor protein]-L-lysine.. Its pathway is protein modification; protein ubiquitination. Has very low E3 ubiquitin ligase activity in the absence of sphingosine-1-phosphate. E3 ubiquitin ligase activity is strongly activated by cytoplasmic sphingosine-1-phosphate. Functionally, E3 ubiquitin-protein ligase that regulates activation of NF-kappa-B and JNK and plays a central role in the regulation of cell survival and apoptosis. Catalyzes 'Lys-63'-linked ubiquitination of target proteins, such as BIRC3, IKBKE, MLST8, RIPK1 and TICAM1. Is an essential constituent of several E3 ubiquitin-protein ligase complexes, where it promotes the ubiquitination of target proteins by bringing them into contact with other E3 ubiquitin ligases. Regulates BIRC2 and BIRC3 protein levels by inhibiting their autoubiquitination and subsequent degradation; this does not depend on the TRAF2 RING-type zinc finger domain. Plays a role in mediating activation of NF-kappa-B by EIF2AK2/PKR. In complex with BIRC2 or BIRC3, promotes ubiquitination of IKBKE. Acts as a regulator of mTORC1 and mTORC2 assembly by mediating 'Lys-63'-linked ubiquitination of MLST8, thereby inhibiting formation of the mTORC2 complex, while facilitating assembly of the mTORC1 complex. Required for normal antibody isotype switching from IgM to IgG. The polypeptide is TNF receptor-associated factor 2 (Traf2) (Mus musculus (Mouse)).